Here is a 124-residue protein sequence, read N- to C-terminus: uncharacterized protein (124 aa).

This is an uncharacterized protein from Acanthamoeba polyphaga (Amoeba).